Consider the following 467-residue polypeptide: Putative vacuolar protein sorting-associated protein TDA6 (467 aa).

A helical membrane pass occupies residues 8 to 28; sequence ILLWFLIVDLSVIRALVLPPL. Asn-61, Asn-124, and Asn-141 each carry an N-linked (GlcNAc...) asparagine glycan.

This sequence belongs to the VPS62 family.

The protein localises to the membrane. Its function is as follows. Involved in vacuolar protein sorting. The sequence is that of Putative vacuolar protein sorting-associated protein TDA6 (TDA6) from Saccharomyces cerevisiae (strain ATCC 204508 / S288c) (Baker's yeast).